The sequence spans 86 residues: Large ribosomal subunit protein bL31B (86 aa).

Belongs to the bacterial ribosomal protein bL31 family. Type B subfamily. As to quaternary structure, part of the 50S ribosomal subunit.

The sequence is that of Large ribosomal subunit protein bL31B from Streptococcus pyogenes serotype M1.